Reading from the N-terminus, the 556-residue chain is Phosphoenolpyruvate-protein phosphotransferase (556 aa).

The Tele-phosphohistidine intermediate role is filled by His186. Residues Arg288 and Arg325 each coordinate phosphoenolpyruvate. 2 residues coordinate Mg(2+): Glu415 and Asp439. Phosphoenolpyruvate is bound by residues 438–439 (ND) and Arg449. Cys486 (proton donor) is an active-site residue.

The protein belongs to the PEP-utilizing enzyme family. As to quaternary structure, homodimer. It depends on Mg(2+) as a cofactor.

It localises to the cytoplasm. The enzyme catalyses L-histidyl-[protein] + phosphoenolpyruvate = N(pros)-phospho-L-histidyl-[protein] + pyruvate. Its function is as follows. General (non sugar-specific) component of the phosphoenolpyruvate-dependent sugar phosphotransferase system (sugar PTS). This major carbohydrate active-transport system catalyzes the phosphorylation of incoming sugar substrates concomitantly with their translocation across the cell membrane. Enzyme I transfers the phosphoryl group from phosphoenolpyruvate (PEP) to the phosphoryl carrier protein (HPr). The chain is Phosphoenolpyruvate-protein phosphotransferase (ptsI) from Streptomyces coelicolor (strain ATCC BAA-471 / A3(2) / M145).